The primary structure comprises 307 residues: Ras-related protein Rab-33 (307 aa).

The tract at residues Val19–Ala80 is disordered. 2 stretches are compositionally biased toward pro residues: residues Pro42–Pro56 and Pro65–Pro75. Position 107–114 (Gly107–Thr114) interacts with GTP. The short motif at Thr129–Phe137 is the Effector region element. GTP is bound by residues Asp155–Gln159 and Asn217–Asp220. S-geranylgeranyl cysteine attachment occurs at residues Cys306 and Cys307.

It belongs to the small GTPase superfamily. Rab family.

Its subcellular location is the cell membrane. The chain is Ras-related protein Rab-33 (rab-33) from Caenorhabditis elegans.